Reading from the N-terminus, the 218-residue chain is Octanoyltransferase (218 aa).

A BPL/LPL catalytic domain is found at 30–213 (GEIEDTLILV…YFSEVFNYDI (184 aa)). Substrate contacts are provided by residues 75-82 (RGGDVTYH), 143-145 (AIG), and 156-158 (GFA). Cys174 functions as the Acyl-thioester intermediate in the catalytic mechanism.

Belongs to the LipB family.

Its subcellular location is the cytoplasm. It carries out the reaction octanoyl-[ACP] + L-lysyl-[protein] = N(6)-octanoyl-L-lysyl-[protein] + holo-[ACP] + H(+). Its pathway is protein modification; protein lipoylation via endogenous pathway; protein N(6)-(lipoyl)lysine from octanoyl-[acyl-carrier-protein]: step 1/2. Functionally, catalyzes the transfer of endogenously produced octanoic acid from octanoyl-acyl-carrier-protein onto the lipoyl domains of lipoate-dependent enzymes. Lipoyl-ACP can also act as a substrate although octanoyl-ACP is likely to be the physiological substrate. The polypeptide is Octanoyltransferase (Alkaliphilus metalliredigens (strain QYMF)).